We begin with the raw amino-acid sequence, 419 residues long: Phospho-N-acetylmuramoyl-pentapeptide-transferase (419 aa).

10 helical membrane-spanning segments follow: residues 22–42 (YVSF…TVIG), 72–92 (TPTM…LLLA), 99–119 (ILLM…DDYI), 135–155 (IIGQ…NPAV), 208–228 (VLFG…FISN), 238–258 (GLAT…AYVS), 278–298 (LTIF…YNAY), 303–323 (FMGD…ALII), 328–348 (LLPI…IQVF), and 396–416 (KITV…IATL).

Belongs to the glycosyltransferase 4 family. MraY subfamily. Mg(2+) serves as cofactor.

It is found in the cell inner membrane. It carries out the reaction UDP-N-acetyl-alpha-D-muramoyl-L-alanyl-gamma-D-glutamyl-meso-2,6-diaminopimeloyl-D-alanyl-D-alanine + di-trans,octa-cis-undecaprenyl phosphate = di-trans,octa-cis-undecaprenyl diphospho-N-acetyl-alpha-D-muramoyl-L-alanyl-D-glutamyl-meso-2,6-diaminopimeloyl-D-alanyl-D-alanine + UMP. Its pathway is cell wall biogenesis; peptidoglycan biosynthesis. Its function is as follows. Catalyzes the initial step of the lipid cycle reactions in the biosynthesis of the cell wall peptidoglycan: transfers peptidoglycan precursor phospho-MurNAc-pentapeptide from UDP-MurNAc-pentapeptide onto the lipid carrier undecaprenyl phosphate, yielding undecaprenyl-pyrophosphoryl-MurNAc-pentapeptide, known as lipid I. The sequence is that of Phospho-N-acetylmuramoyl-pentapeptide-transferase from Porphyromonas gingivalis (strain ATCC BAA-308 / W83).